The sequence spans 167 residues: UPF0303 protein mlr5144 (167 aa).

Belongs to the UPF0303 family.

The chain is UPF0303 protein mlr5144 from Mesorhizobium japonicum (strain LMG 29417 / CECT 9101 / MAFF 303099) (Mesorhizobium loti (strain MAFF 303099)).